Here is a 513-residue protein sequence, read N- to C-terminus: ATP synthase subunit alpha 1 (513 aa).

169-176 is a binding site for ATP; it reads GDRQTGKT.

It belongs to the ATPase alpha/beta chains family. F-type ATPases have 2 components, CF(1) - the catalytic core - and CF(0) - the membrane proton channel. CF(1) has five subunits: alpha(3), beta(3), gamma(1), delta(1), epsilon(1). CF(0) has three main subunits: a(1), b(2) and c(9-12). The alpha and beta chains form an alternating ring which encloses part of the gamma chain. CF(1) is attached to CF(0) by a central stalk formed by the gamma and epsilon chains, while a peripheral stalk is formed by the delta and b chains.

It localises to the cell inner membrane. The enzyme catalyses ATP + H2O + 4 H(+)(in) = ADP + phosphate + 5 H(+)(out). Its function is as follows. Produces ATP from ADP in the presence of a proton gradient across the membrane. The alpha chain is a regulatory subunit. In Nitrosospira multiformis (strain ATCC 25196 / NCIMB 11849 / C 71), this protein is ATP synthase subunit alpha 1.